The primary structure comprises 206 residues: MASGKFITFEGIDGAGKTTHLQWFCERLQGRLAAAGRQVVVTREPGGTQLGEKLREILLNQPMDLETEALLMFAARREHLALVIEPALARGDWVVSDRFTDATFAYQGGGRGLPRDKLETLERWVQGGFQPDLTVLFDVAPQVASERRGAVRMPDKFESESDAFFSRTRAEYLRRAEEAPHRFAIVDATRSIPEIRQQLERVLAAL.

11–18 (GIDGAGKT) contacts ATP.

This sequence belongs to the thymidylate kinase family.

It carries out the reaction dTMP + ATP = dTDP + ADP. Functionally, phosphorylation of dTMP to form dTDP in both de novo and salvage pathways of dTTP synthesis. The polypeptide is Thymidylate kinase (Burkholderia cenocepacia (strain HI2424)).